The following is a 346-amino-acid chain: Protein NDL1 (346 aa).

The protein belongs to the NDRG family. Interacts with GB1. Interacts with the heterodimers formed by GB1 and GG1, or GB1 and GG2. Interacts with RGS1. In terms of tissue distribution, expressed in root vasculature, cotyledons, leaves, petals, mature stamens and pollen grains.

The protein resides in the cytoplasm. Functionally, interacts with the heterotrimeric G protein beta subunit GB1 and plays an significant role in GB1-dependent regulation of lateral root formation. Involved in a signaling pathway that modulates root auxin transport and auxin gradients. Acts partially by positively regulating the auxin carrier PIN2 and AUX1. Acts, together with GB1 as positive regulator of meristem initiation and branching. GB1 and NDL1 positively regulate basipetal inflorescence auxin transport and modulate MAX2 expression in shoots, which regulates organ and lateral meristem formation by the establishment and maintenance of auxin gradients. This chain is Protein NDL1, found in Arabidopsis thaliana (Mouse-ear cress).